A 365-amino-acid polypeptide reads, in one-letter code: Peptide chain release factor 1 (365 aa).

An N5-methylglutamine modification is found at Q242.

This sequence belongs to the prokaryotic/mitochondrial release factor family. Post-translationally, methylated by PrmC. Methylation increases the termination efficiency of RF1.

The protein resides in the cytoplasm. Functionally, peptide chain release factor 1 directs the termination of translation in response to the peptide chain termination codons UAG and UAA. This chain is Peptide chain release factor 1, found in Fusobacterium nucleatum subsp. nucleatum (strain ATCC 25586 / DSM 15643 / BCRC 10681 / CIP 101130 / JCM 8532 / KCTC 2640 / LMG 13131 / VPI 4355).